The chain runs to 393 residues: Chorismate synthase (393 aa).

The NADP(+) site is built by Arg40 and Arg46. Residues 129–131, 249–250, Gly301, 316–320, and Arg342 contribute to the FMN site; these read RSS, QA, and KPIPT.

This sequence belongs to the chorismate synthase family. As to quaternary structure, homotetramer. FMNH2 is required as a cofactor.

It carries out the reaction 5-O-(1-carboxyvinyl)-3-phosphoshikimate = chorismate + phosphate. The protein operates within metabolic intermediate biosynthesis; chorismate biosynthesis; chorismate from D-erythrose 4-phosphate and phosphoenolpyruvate: step 7/7. Catalyzes the anti-1,4-elimination of the C-3 phosphate and the C-6 proR hydrogen from 5-enolpyruvylshikimate-3-phosphate (EPSP) to yield chorismate, which is the branch point compound that serves as the starting substrate for the three terminal pathways of aromatic amino acid biosynthesis. This reaction introduces a second double bond into the aromatic ring system. This chain is Chorismate synthase, found in Geotalea daltonii (strain DSM 22248 / JCM 15807 / FRC-32) (Geobacter daltonii).